The sequence spans 230 residues: Cytochrome c oxidase subunit 2 (230 aa).

Residues 1–14 (MAHPSQLGFQDAAS) lie on the Mitochondrial intermembrane side of the membrane. The helical transmembrane segment at 15-45 (PVMEELLHFHDHALMIVFLISTLVLYIIAAT) threads the bilayer. At 46-59 (ASTKLTDKYILDSQ) the chain is on the mitochondrial matrix side. Residues 60–87 (EIEVIWTIMPAVILILIALPSLRILYLM) form a helical membrane-spanning segment. Topologically, residues 88 to 230 (DEINDPHLTV…NWSSLMLEDA (143 aa)) are mitochondrial intermembrane. The Cu cation site is built by His-161, Cys-196, Glu-198, Cys-200, His-204, and Met-207. Glu-198 provides a ligand contact to Mg(2+).

It belongs to the cytochrome c oxidase subunit 2 family. As to quaternary structure, component of the cytochrome c oxidase (complex IV, CIV), a multisubunit enzyme composed of 14 subunits. The complex is composed of a catalytic core of 3 subunits MT-CO1, MT-CO2 and MT-CO3, encoded in the mitochondrial DNA, and 11 supernumerary subunits COX4I, COX5A, COX5B, COX6A, COX6B, COX6C, COX7A, COX7B, COX7C, COX8 and NDUFA4, which are encoded in the nuclear genome. The complex exists as a monomer or a dimer and forms supercomplexes (SCs) in the inner mitochondrial membrane with NADH-ubiquinone oxidoreductase (complex I, CI) and ubiquinol-cytochrome c oxidoreductase (cytochrome b-c1 complex, complex III, CIII), resulting in different assemblies (supercomplex SCI(1)III(2)IV(1) and megacomplex MCI(2)III(2)IV(2)). Found in a complex with TMEM177, COA6, COX18, COX20, SCO1 and SCO2. Interacts with TMEM177 in a COX20-dependent manner. Interacts with COX20. Interacts with COX16. Requires Cu cation as cofactor.

It is found in the mitochondrion inner membrane. It carries out the reaction 4 Fe(II)-[cytochrome c] + O2 + 8 H(+)(in) = 4 Fe(III)-[cytochrome c] + 2 H2O + 4 H(+)(out). Component of the cytochrome c oxidase, the last enzyme in the mitochondrial electron transport chain which drives oxidative phosphorylation. The respiratory chain contains 3 multisubunit complexes succinate dehydrogenase (complex II, CII), ubiquinol-cytochrome c oxidoreductase (cytochrome b-c1 complex, complex III, CIII) and cytochrome c oxidase (complex IV, CIV), that cooperate to transfer electrons derived from NADH and succinate to molecular oxygen, creating an electrochemical gradient over the inner membrane that drives transmembrane transport and the ATP synthase. Cytochrome c oxidase is the component of the respiratory chain that catalyzes the reduction of oxygen to water. Electrons originating from reduced cytochrome c in the intermembrane space (IMS) are transferred via the dinuclear copper A center (CU(A)) of subunit 2 and heme A of subunit 1 to the active site in subunit 1, a binuclear center (BNC) formed by heme A3 and copper B (CU(B)). The BNC reduces molecular oxygen to 2 water molecules using 4 electrons from cytochrome c in the IMS and 4 protons from the mitochondrial matrix. This is Cytochrome c oxidase subunit 2 (mt-co2) from Tetraodon nigroviridis (Spotted green pufferfish).